A 355-amino-acid polypeptide reads, in one-letter code: Protein RecA (355 aa).

An ATP-binding site is contributed by 72–79; sequence GPESSGKT.

The protein belongs to the RecA family.

It localises to the cytoplasm. Can catalyze the hydrolysis of ATP in the presence of single-stranded DNA, the ATP-dependent uptake of single-stranded DNA by duplex DNA, and the ATP-dependent hybridization of homologous single-stranded DNAs. It interacts with LexA causing its activation and leading to its autocatalytic cleavage. The chain is Protein RecA from Wolbachia sp. subsp. Brugia malayi (strain TRS).